An 863-amino-acid polypeptide reads, in one-letter code: Protein translocase subunit SecA (863 aa).

Residues Gln88, 106–110 (GEGKT), and Asp496 contribute to the ATP site. The disordered stretch occupies residues 818–842 (EVKTEPVITKKKPARNEPCPCGSGK). Zn(2+) contacts are provided by Cys836, Cys838, Cys847, and Cys848.

This sequence belongs to the SecA family. As to quaternary structure, monomer and homodimer. Part of the essential Sec protein translocation apparatus which comprises SecA, SecYEG and auxiliary proteins SecDF-YajC and YidC. Zn(2+) serves as cofactor.

Its subcellular location is the cell inner membrane. The protein resides in the cytoplasm. It catalyses the reaction ATP + H2O + cellular proteinSide 1 = ADP + phosphate + cellular proteinSide 2.. Functionally, part of the Sec protein translocase complex. Interacts with the SecYEG preprotein conducting channel. Has a central role in coupling the hydrolysis of ATP to the transfer of proteins into and across the cell membrane, serving as an ATP-driven molecular motor driving the stepwise translocation of polypeptide chains across the membrane. This Nitratiruptor sp. (strain SB155-2) protein is Protein translocase subunit SecA.